The following is an 86-amino-acid chain: Large ribosomal subunit protein uL23 (86 aa).

This sequence belongs to the universal ribosomal protein uL23 family. Part of the 50S ribosomal subunit. Contacts protein L29.

Its function is as follows. Binds to 23S rRNA. One of the proteins that surrounds the polypeptide exit tunnel on the outside of the ribosome. In Methanosphaera stadtmanae (strain ATCC 43021 / DSM 3091 / JCM 11832 / MCB-3), this protein is Large ribosomal subunit protein uL23.